Reading from the N-terminus, the 61-residue chain is MAKKSMIAKAKRKPKFKVRAYTRCSICGRVHSVYRDFGICRICLRKMANEGLLPGVKKASW.

Zn(2+) contacts are provided by C24, C27, C40, and C43.

Belongs to the universal ribosomal protein uS14 family. Zinc-binding uS14 subfamily. Part of the 30S ribosomal subunit. Contacts proteins S3 and S10. Zn(2+) is required as a cofactor.

Functionally, binds 16S rRNA, required for the assembly of 30S particles and may also be responsible for determining the conformation of the 16S rRNA at the A site. This Nautilia profundicola (strain ATCC BAA-1463 / DSM 18972 / AmH) protein is Small ribosomal subunit protein uS14.